A 153-amino-acid polypeptide reads, in one-letter code: uncharacterized protein (153 aa).

Disordered stretches follow at residues 24 to 87 and 101 to 153; these read PEDS…DRPL and GDPR…RIPS. Residues 27-37 show a composition bias toward low complexity; that stretch reads SSCPCPRLPLS. The span at 143–153 shows a compositional bias: basic and acidic residues; that stretch reads TRKESSCRIPS.

This is an uncharacterized protein from Dryophytes versicolor (chameleon treefrog).